Here is a 585-residue protein sequence, read N- to C-terminus: Serine/threonine-protein kinase Nek3 (585 aa).

The Protein kinase domain maps to 4 to 258; it reads YEVLEQIGKG…AAELLKHPHL (255 aa). ATP is bound by residues 10–18 and Lys-33; that span reads IGKGSFGSA. Asp-129 (proton acceptor) is an active-site residue. Disordered regions lie at residues 354 to 413 and 489 to 511; these read GNHS…TPVN and DSSK…SNPL. Polar residues-rich tracts occupy residues 400 to 413 and 498 to 511; these read RASQ…TPVN and SSDP…SNPL.

The protein belongs to the protein kinase superfamily. NEK Ser/Thr protein kinase family. NIMA subfamily. Interacts with PLIM2B. As to expression, expressed in pollen grains.

It catalyses the reaction L-seryl-[protein] + ATP = O-phospho-L-seryl-[protein] + ADP + H(+). The catalysed reaction is L-threonyl-[protein] + ATP = O-phospho-L-threonyl-[protein] + ADP + H(+). In terms of biological role, may be involved in plant development processes. May function downstream of DCW11 in retrograde signaling from the mitochondria to the nucleus. Seems to be involved in the mechanism of cytoplasmic male sterility (CMS) occurrence. In Oryza sativa subsp. japonica (Rice), this protein is Serine/threonine-protein kinase Nek3.